The primary structure comprises 69 residues: Beta-defensin 122 (69 aa).

Residues 1-19 form the signal peptide; that stretch reads MKPFLVTLAVLLLFFQVTA. 3 disulfide bridges follow: Cys26–Cys53, Cys33–Cys47, and Cys37–Cys54.

This sequence belongs to the beta-defensin family.

The protein resides in the secreted. Functionally, has antibacterial activity. The chain is Beta-defensin 122 (DEFB122) from Macaca mulatta (Rhesus macaque).